Consider the following 336-residue polypeptide: Putative ALA-interacting subunit 4 (336 aa).

A helical membrane pass occupies residues 36-56; the sequence is VILTFLVSGVVFIPLGVICLF. N-linked (GlcNAc...) asparagine glycosylation occurs at Asn94. Residues 127-142 show a composition bias toward basic and acidic residues; it reads RQDGQLRSPKDEHETK. The tract at residues 127–148 is disordered; that stretch reads RQDGQLRSPKDEHETKSCAPED. Asn167 carries N-linked (GlcNAc...) asparagine glycosylation. The chain crosses the membrane as a helical span at residues 290-310; that stretch reads FLGIAYLTVGSICLFLAVSFS. A glycan (N-linked (GlcNAc...) asparagine) is linked at Asn329.

The protein belongs to the CDC50/LEM3 family. Expressed in flowers. May be restricted to pollen grains.

The protein localises to the membrane. The protein is Putative ALA-interacting subunit 4 (ALIS4) of Arabidopsis thaliana (Mouse-ear cress).